The primary structure comprises 497 residues: UPF0371 protein cu0538 (497 aa).

Belongs to the UPF0371 family.

This chain is UPF0371 protein cu0538, found in Corynebacterium urealyticum (strain ATCC 43042 / DSM 7109).